A 540-amino-acid chain; its full sequence is Cystathionine gamma-synthase 1, chloroplastic (540 aa).

A chloroplast-targeting transit peptide spans 1-78; it reads MAVSSCARAF…RNCSNIGVAQ (78 aa). Pyridoxal 5'-phosphate is bound by residues Tyr203, Arg205, Gly233, Met234, Tyr258, Ser353, and Thr355. Lys356 is subject to N6-(pyridoxal phosphate)lysine.

The protein belongs to the trans-sulfuration enzymes family. In terms of assembly, forms homotetramers composed of 2 homodimers. Pyridoxal 5'-phosphate serves as cofactor.

The protein localises to the plastid. The protein resides in the chloroplast. The enzyme catalyses O-phospho-L-homoserine + L-cysteine = L,L-cystathionine + phosphate. It catalyses the reaction O-succinyl-L-homoserine + L-cysteine = L,L-cystathionine + succinate + H(+). Its pathway is amino-acid biosynthesis; L-methionine biosynthesis via de novo pathway; L-cystathionine from O-succinyl-L-homoserine: step 1/1. Irreversibly inactivated by DL-propargylglycine. Its function is as follows. Catalyzes the first committed step of methionine (Met) biosynthesis. Catalyzes the formation of L-cystathionine from homoserine esters and L-cysteine, via a gamma-replacement reaction. This Nicotiana tabacum (Common tobacco) protein is Cystathionine gamma-synthase 1, chloroplastic.